The following is a 158-amino-acid chain: S-ribosylhomocysteine lyase (158 aa).

Residues His55, His59, and Cys127 each coordinate Fe cation.

Belongs to the LuxS family. Homodimer. Requires Fe cation as cofactor.

It carries out the reaction S-(5-deoxy-D-ribos-5-yl)-L-homocysteine = (S)-4,5-dihydroxypentane-2,3-dione + L-homocysteine. In terms of biological role, involved in the synthesis of autoinducer 2 (AI-2) which is secreted by bacteria and is used to communicate both the cell density and the metabolic potential of the environment. The regulation of gene expression in response to changes in cell density is called quorum sensing. Catalyzes the transformation of S-ribosylhomocysteine (RHC) to homocysteine (HC) and 4,5-dihydroxy-2,3-pentadione (DPD). The protein is S-ribosylhomocysteine lyase of Geobacillus thermodenitrificans (strain NG80-2).